The primary structure comprises 163 residues: Transcription antitermination protein NusB (163 aa).

The protein belongs to the NusB family.

Its function is as follows. Involved in transcription antitermination. Required for transcription of ribosomal RNA (rRNA) genes. Binds specifically to the boxA antiterminator sequence of the ribosomal RNA (rrn) operons. This is Transcription antitermination protein NusB from Chlorobium luteolum (strain DSM 273 / BCRC 81028 / 2530) (Pelodictyon luteolum).